The sequence spans 522 residues: Sensory neuron membrane protein 2 (522 aa).

The Cytoplasmic portion of the chain corresponds to 1–7 (MLGKHTK). Residues 8 to 28 (LFFGVSLVALIVSVILAAWGF) form a helical membrane-spanning segment. At 29 to 469 (PKIVSKQIQK…QSHTLLGYVE (441 aa)) the chain is on the extracellular side. N-linked (GlcNAc...) asparagine glycosylation is found at Asn44, Asn67, Asn104, Asn166, Asn191, Asn228, Asn272, Asn314, and Asn343. 3 cysteine pairs are disulfide-bonded: Cys268/Cys338, Cys299/Cys362, and Cys340/Cys351. A helical transmembrane segment spans residues 470–490 (AVRWALLAIAIVATAISAIAV). At 491 to 522 (ARSGLIPVWPRNANSVSFILSPHPNSDVNKVH) the chain is on the cytoplasmic side.

It belongs to the CD36 family. In terms of tissue distribution, detected in both male and female antennal tissues. Expression is two to three fold higher in male compared to female antenna. Detected at low levels in all body tissues except the female abdomen.

The protein resides in the cell membrane. Plays an olfactory role that is not restricted to pheromone sensitivity. The protein is Sensory neuron membrane protein 2 of Ostrinia furnacalis (Asian corn borer).